The following is a 211-amino-acid chain: Endonuclease V (211 aa).

2 residues coordinate Mg(2+): Asp-37 and Asp-102.

Belongs to the endonuclease V family. The cofactor is Mg(2+).

Its subcellular location is the cytoplasm. The catalysed reaction is Endonucleolytic cleavage at apurinic or apyrimidinic sites to products with a 5'-phosphate.. Functionally, DNA repair enzyme involved in the repair of deaminated bases. Selectively cleaves double-stranded DNA at the second phosphodiester bond 3' to a deoxyinosine leaving behind the intact lesion on the nicked DNA. The polypeptide is Endonuclease V (Ignicoccus hospitalis (strain KIN4/I / DSM 18386 / JCM 14125)).